We begin with the raw amino-acid sequence, 1253 residues long: Cytoplasmic FMR1-interacting protein 1 homolog (1253 aa).

This sequence belongs to the CYFIP family.

The protein localises to the cytoplasm. It is found in the perinuclear region. It localises to the cell projection. Its subcellular location is the lamellipodium. The protein resides in the ruffle. The protein localises to the synapse. It is found in the synaptosome. Functionally, involved in formation of membrane ruffles and lamellipodia protrusions and in axon outgrowth. Binds to F-actin but not to RNA. The sequence is that of Cytoplasmic FMR1-interacting protein 1 homolog from Danio rerio (Zebrafish).